We begin with the raw amino-acid sequence, 336 residues long: COP9 signalosome complex subunit 5 (336 aa).

Residues 44-181 (VRISSVAMIK…IGAFRTIPEG (138 aa)) enclose the MPN domain. Positions 127, 129, and 140 each coordinate Zn(2+). The short motif at 127 to 140 (HSHPGYGCWLSGID) is the JAMM motif element.

This sequence belongs to the peptidase M67A family. CSN5 subfamily. As to quaternary structure, component of the COP9 signalosome (CSN) complex.

It localises to the cytoplasm. Its subcellular location is the nucleus. Functionally, catalytic component of the COP9 signalosome (CSN) complex that acts as an regulator of the ubiquitin (Ubl) conjugation pathway by mediating the deneddylation of the cullin subunit of SCF-type E3 ubiquitin-protein ligase complexes. The CSN complex is involved in the regulation of the circadian clock through its control of the stability of the SCF(FWD-1) complex. This is COP9 signalosome complex subunit 5 (csn-5) from Neurospora crassa (strain ATCC 24698 / 74-OR23-1A / CBS 708.71 / DSM 1257 / FGSC 987).